The following is a 377-amino-acid chain: MLRNKSQKELLHLSRQLIQPLLPNFHKGQAGKIVVIGGNEDYTGAPFFASHSAALVGADLSHVICEKAAGPVIKSYSPDLMIHPYLMDLDNPHLNLNNSELEKLKNLPIDEIIKTNDNAVLNKLIDELILPKVTSLLNRIDIVVVGPGFGRDPLMLKSLIRIIEEVKVLNLPIILDADSLYLVSLSPKIIANYPKAIITPNVVEFQRIAKALSIDADLSESNKDKLIDQTIEVSRKLGDIIVFRKGEHDLIVKSSKFLINEITGSNKRVGGQGDTLTGAIATLVNWSNNYILRLWDNQVVVNWSNNYILRLWDNQVDLDQEDANLLACFAASSVVRNASSKAFNKYGRSMQTSNVHEYLHESFTELFGDSIFRTSNI.

In terms of domain architecture, YjeF C-terminal spans 10–366 (LLHLSRQLIQ…EYLHESFTEL (357 aa)). (6S)-NADPHX is bound by residues Gly-148 and 201–207 (NVVEFQR). ATP is bound by residues 245-249 (KGEHD) and 264-273 (GSNKRVGGQG). Asp-274 contributes to the (6S)-NADPHX binding site.

It belongs to the NnrD/CARKD family. Requires Mg(2+) as cofactor.

Its subcellular location is the cytoplasm. It carries out the reaction (6S)-NADHX + ATP = ADP + phosphate + NADH + H(+). The enzyme catalyses (6S)-NADPHX + ATP = ADP + phosphate + NADPH + H(+). Catalyzes the dehydration of the S-form of NAD(P)HX at the expense of ATP, which is converted to ADP. Together with NAD(P)HX epimerase, which catalyzes the epimerization of the S- and R-forms, the enzyme allows the repair of both epimers of NAD(P)HX, a damaged form of NAD(P)H that is a result of enzymatic or heat-dependent hydration. The sequence is that of ATP-dependent (S)-NAD(P)H-hydrate dehydratase from Candida albicans (strain SC5314 / ATCC MYA-2876) (Yeast).